Reading from the N-terminus, the 326-residue chain is Acetyl-coenzyme A carboxylase carboxyl transferase subunit alpha (326 aa).

A CoA carboxyltransferase C-terminal domain is found at 44–298 (QLESRAEQLR…KEALLFHLNT (255 aa)).

The protein belongs to the AccA family. Acetyl-CoA carboxylase is a heterohexamer composed of biotin carboxyl carrier protein (AccB), biotin carboxylase (AccC) and two subunits each of ACCase subunit alpha (AccA) and ACCase subunit beta (AccD).

It is found in the cytoplasm. The enzyme catalyses N(6)-carboxybiotinyl-L-lysyl-[protein] + acetyl-CoA = N(6)-biotinyl-L-lysyl-[protein] + malonyl-CoA. Its pathway is lipid metabolism; malonyl-CoA biosynthesis; malonyl-CoA from acetyl-CoA: step 1/1. Component of the acetyl coenzyme A carboxylase (ACC) complex. First, biotin carboxylase catalyzes the carboxylation of biotin on its carrier protein (BCCP) and then the CO(2) group is transferred by the carboxyltransferase to acetyl-CoA to form malonyl-CoA. This chain is Acetyl-coenzyme A carboxylase carboxyl transferase subunit alpha, found in Synechocystis sp. (strain ATCC 27184 / PCC 6803 / Kazusa).